Consider the following 120-residue polypeptide: Large ribosomal subunit protein bL19 (120 aa).

This sequence belongs to the bacterial ribosomal protein bL19 family.

Functionally, this protein is located at the 30S-50S ribosomal subunit interface and may play a role in the structure and function of the aminoacyl-tRNA binding site. The chain is Large ribosomal subunit protein bL19 from Thermodesulfovibrio yellowstonii (strain ATCC 51303 / DSM 11347 / YP87).